The chain runs to 432 residues: D-amino acid dehydrogenase (432 aa).

3–17 (VVILGSGVVGVTSAW) is an FAD binding site.

Belongs to the DadA oxidoreductase family. The cofactor is FAD.

The protein resides in the cell inner membrane. It catalyses the reaction a D-alpha-amino acid + A + H2O = a 2-oxocarboxylate + AH2 + NH4(+). It participates in amino-acid degradation; D-alanine degradation; NH(3) and pyruvate from D-alanine: step 1/1. Functionally, oxidative deamination of D-amino acids. The sequence is that of D-amino acid dehydrogenase from Salmonella typhi.